The primary structure comprises 1059 residues: Translation initiation factor IF-2 (1059 aa).

Composition is skewed to polar residues over residues 55 to 75 (LPHSPSLSAAPEKSNSQNQDS) and 107 to 126 (KINNNLVTTPPNTSVLNNQV). 3 disordered regions span residues 55-81 (LPHSPSLSAAPEKSNSQNQDSGIGYNE), 93-394 (PKPL…RLRL), and 418-468 (SLSL…QSAE). Residues 178–187 (DSNEKSKVEV) show a composition bias toward basic and acidic residues. Over residues 202–211 (LNRNLRNTGV) the composition is skewed to polar residues. Positions 216 to 229 (QKNKKPKQEGKKRK) are enriched in basic residues. 2 stretches are compositionally biased toward basic and acidic residues: residues 230 to 252 (DKEEKPFEKPAIVSKKENKDTSI) and 259 to 273 (SKKENKDTFQNRESV). Residues 274–284 (KTSASDTSSQL) are compositionally biased toward polar residues. Composition is skewed to basic and acidic residues over residues 291–300 (KPTVKLKQEQ) and 359–368 (LTKDKKVSKW). A compositionally biased stretch (low complexity) spans 452–463 (SHESVQSESNEQ). The tr-type G domain occupies 556 to 733 (RRPPVVTIMG…EVEDLQANPE (178 aa)). A G1 region spans residues 565 to 572 (GHVDHGKT). 565-572 (GHVDHGKT) serves as a coordination point for GTP. Positions 590–594 (GITQH) are G2. Residues 615-618 (DTPG) are G3. Residues 615–619 (DTPGH) and 669–672 (NKID) contribute to the GTP site. A G4 region spans residues 669-672 (NKID). The interval 705–707 (SAI) is G5.

This sequence belongs to the TRAFAC class translation factor GTPase superfamily. Classic translation factor GTPase family. IF-2 subfamily.

Its subcellular location is the cytoplasm. In terms of biological role, one of the essential components for the initiation of protein synthesis. Protects formylmethionyl-tRNA from spontaneous hydrolysis and promotes its binding to the 30S ribosomal subunits. Also involved in the hydrolysis of GTP during the formation of the 70S ribosomal complex. The chain is Translation initiation factor IF-2 from Trichodesmium erythraeum (strain IMS101).